The sequence spans 299 residues: Dye-decolorizing peroxidase YfeX (299 aa).

Residue His215 participates in heme binding.

It belongs to the DyP-type peroxidase family. Heme b serves as cofactor.

Its subcellular location is the cytoplasm. Its function is as follows. Has both general peroxidase activity and dye-decolorizing activity. Can catalyze the oxidation of 2,2'-azino-bis(3-ethylbenzothiazoline-6-sulphonic acid) (ABTS), and the phenolic compounds guaiacol and catechol. Also decolorizes the anthraquinone dye reactive blue 19 (RB19). The chain is Dye-decolorizing peroxidase YfeX from Escherichia coli O157:H7.